We begin with the raw amino-acid sequence, 104 residues long: L-rhamnose mutarotase (104 aa).

Y18 contributes to the substrate binding site. The active-site Proton donor is the H22. Residues Y41 and 76–77 contribute to the substrate site; that span reads WW.

The protein belongs to the rhamnose mutarotase family. In terms of assembly, homodimer.

Its subcellular location is the cytoplasm. The catalysed reaction is alpha-L-rhamnose = beta-L-rhamnose. It functions in the pathway carbohydrate metabolism; L-rhamnose metabolism. In terms of biological role, involved in the anomeric conversion of L-rhamnose. The polypeptide is L-rhamnose mutarotase (Salmonella dublin (strain CT_02021853)).